Reading from the N-terminus, the 398-residue chain is DnaJ-like protein R260 (398 aa).

Positions 7-72 (DLYEILGLTP…EKRRVYDQYG (66 aa)) constitute a J domain. The CR-type zinc-finger motif lies at 118–202 (KKTVKVTITV…CKGAGINKSE (85 aa)). CXXCXGXG motif repeat units follow at residues 131-138 (CDDCDATG), 147-154 (CKVCRGKG), 173-180 (CHGCQGKK), and 190-197 (CPSCKGAG). A disordered region spans residues 364-398 (LRQINTDPSDESQDRDSEESYGGHGRPEGVGCAQQ). Residues 371–382 (PSDESQDRDSEE) are compositionally biased toward acidic residues.

The cofactor is Zn(2+).

This is DnaJ-like protein R260 from Acanthamoeba polyphaga mimivirus (APMV).